An 85-amino-acid polypeptide reads, in one-letter code: Large ribosomal subunit protein eL34 (85 aa).

It belongs to the eukaryotic ribosomal protein eL34 family.

This is Large ribosomal subunit protein eL34 from Saccharolobus islandicus (strain M.16.27) (Sulfolobus islandicus).